We begin with the raw amino-acid sequence, 248 residues long: Triosephosphate isomerase (248 aa).

The substrate site is built by Asn10 and Lys12. His95 functions as the Electrophile in the catalytic mechanism. Residue Glu165 is the Proton acceptor of the active site.

Belongs to the triosephosphate isomerase family. As to quaternary structure, homodimer.

It catalyses the reaction D-glyceraldehyde 3-phosphate = dihydroxyacetone phosphate. The protein operates within carbohydrate biosynthesis; gluconeogenesis. Its pathway is carbohydrate degradation; glycolysis; D-glyceraldehyde 3-phosphate from glycerone phosphate: step 1/1. This is Triosephosphate isomerase (TPI1) from Zygosaccharomyces bailii.